A 121-amino-acid chain; its full sequence is Large ribosomal subunit protein bL12 (121 aa).

This sequence belongs to the bacterial ribosomal protein bL12 family. As to quaternary structure, homodimer. Part of the ribosomal stalk of the 50S ribosomal subunit. Forms a multimeric L10(L12)X complex, where L10 forms an elongated spine to which 2 to 4 L12 dimers bind in a sequential fashion. Binds GTP-bound translation factors.

Its function is as follows. Forms part of the ribosomal stalk which helps the ribosome interact with GTP-bound translation factors. Is thus essential for accurate translation. This chain is Large ribosomal subunit protein bL12, found in Aeromonas hydrophila subsp. hydrophila (strain ATCC 7966 / DSM 30187 / BCRC 13018 / CCUG 14551 / JCM 1027 / KCTC 2358 / NCIMB 9240 / NCTC 8049).